The sequence spans 157 residues: Siroheme decarboxylase NirG subunit (157 aa).

The protein belongs to the Ahb/Nir family. As to quaternary structure, forms a complex composed of NirDL, NirG and NirH. All proteins are required for the total conversion of siroheme to didecarboxysiroheme.

It carries out the reaction siroheme + 2 H(+) = 12,18-didecarboxysiroheme + 2 CO2. The protein operates within porphyrin-containing compound metabolism. Functionally, involved in heme d1 biosynthesis. Catalyzes the decarboxylation of siroheme into didecarboxysiroheme. Siroheme is probably decarboxylated to monodecarboxysiroheme, which is in turn decarboxylated to didecarboxysiroheme. This Paracoccus pantotrophus (Thiosphaera pantotropha) protein is Siroheme decarboxylase NirG subunit.